The sequence spans 218 residues: Glutathione S-transferase Mu 1 (218 aa).

A GST N-terminal domain is found at 2-88; it reads PMILGYWNVR…YLARKHHLCG (87 aa). Glutathione contacts are provided by residues 7-8, 43-46, lysine 50, and 59-60; these read YW, RSQW, and NL. The residue at position 67 (serine 67) is a Phosphoserine. 72–73 lines the glutathione pocket; that stretch reads QS. The region spanning 90–208 is the GST C-terminal domain; it reads TEEERIRADI…KSSRYLSTPI (119 aa). Tyrosine 116 contributes to the substrate binding site. Phosphoserine occurs at positions 205 and 210.

The protein belongs to the GST superfamily. Mu family. Homodimer or heterodimer.

It localises to the cytoplasm. It carries out the reaction RX + glutathione = an S-substituted glutathione + a halide anion + H(+). It catalyses the reaction prostaglandin A2 + glutathione = prostaglandin A2-S-(R)-glutathione. The enzyme catalyses prostaglandin J2 + glutathione = prostaglandin J2-S-(R)-glutathione. The catalysed reaction is prostaglandin J2 + glutathione = prostaglandin J2-S-(S)-glutathione. It carries out the reaction prostaglandin A2 + glutathione = prostaglandin A2-S-(S)-glutathione. It catalyses the reaction 11(S)-hydroxy-14(S),15(S)-epoxy-(5Z,8Z,12E)-eicosatrienoate + glutathione = (11S,15S)-dihydroxy-14(R)-S-glutathionyl-(5Z,8Z,12E)-eicosatrienoate. Its function is as follows. Conjugation of reduced glutathione to a wide number of exogenous and endogenous hydrophobic electrophiles. The olfactory GST may be crucial for the acuity of the olfactory process. Participates in the formation of novel hepoxilin regioisomers. This Rattus norvegicus (Rat) protein is Glutathione S-transferase Mu 1.